The sequence spans 208 residues: Interleukin-6 (208 aa).

The first 27 residues, 1 to 27 (MTFLSTSAFSPLAFSLGLLLVVATAFP), serve as a signal peptide directing secretion. A disulfide bridge links cysteine 68 with cysteine 74. Serine 77 is subject to Phosphoserine. An intrachain disulfide couples cysteine 97 to cysteine 107.

Belongs to the IL-6 superfamily. In terms of assembly, component of a hexamer of two molecules each of IL6, IL6R and IL6ST; first binds to IL6R to associate with the signaling subunit IL6ST. Interacts with IL6R (via the N-terminal ectodomain); this interaction may be affected by IL6R-binding with SORL1, hence decreasing IL6 cis signaling. Interacts with SORL1 (via the N-terminal ectodomain); this interaction leads to IL6 internalization and lysosomal degradation. May form a trimeric complex with the soluble SORL1 ectodomain and soluble IL6R receptor; this interaction might stabilize circulating IL6, hence promoting IL6 trans signaling.

Its subcellular location is the secreted. Functionally, cytokine with a wide variety of biological functions in immunity, tissue regeneration, and metabolism. Binds to IL6R, then the complex associates to the signaling subunit IL6ST/gp130 to trigger the intracellular IL6-signaling pathway. The interaction with the membrane-bound IL6R and IL6ST stimulates 'classic signaling', whereas the binding of IL6 and soluble IL6R to IL6ST stimulates 'trans-signaling'. Alternatively, 'cluster signaling' occurs when membrane-bound IL6:IL6R complexes on transmitter cells activate IL6ST receptors on neighboring receiver cells. Its function is as follows. IL6 is a potent inducer of the acute phase response. Rapid production of IL6 contributes to host defense during infection and tissue injury, but excessive IL6 synthesis is involved in disease pathology. In the innate immune response, is synthesized by myeloid cells, such as macrophages and dendritic cells, upon recognition of pathogens through toll-like receptors (TLRs) at the site of infection or tissue injury. In the adaptive immune response, is required for the differentiation of B cells into immunoglobulin-secreting cells. Plays a major role in the differentiation of CD4(+) T cell subsets. Essential factor for the development of T follicular helper (Tfh) cells that are required for the induction of germinal-center formation. Required to drive naive CD4(+) T cells to the Th17 lineage. Also required for proliferation of myeloma cells and the survival of plasmablast cells. In terms of biological role, acts as an essential factor in bone homeostasis and on vessels directly or indirectly by induction of VEGF, resulting in increased angiogenesis activity and vascular permeability. Induces, through 'trans-signaling' and synergistically with IL1B and TNF, the production of VEGF. Involved in metabolic controls, is discharged into the bloodstream after muscle contraction increasing lipolysis and improving insulin resistance. 'Trans-signaling' in central nervous system also regulates energy and glucose homeostasis. Mediates, through GLP-1, crosstalk between insulin-sensitive tissues, intestinal L cells and pancreatic islets to adapt to changes in insulin demand. Also acts as a myokine. Plays a protective role during liver injury, being required for maintenance of tissue regeneration. Also has a pivotal role in iron metabolism by regulating HAMP/hepcidin expression upon inflammation or bacterial infection. Through activation of IL6ST-YAP-NOTCH pathway, induces inflammation-induced epithelial regeneration. The chain is Interleukin-6 (IL6) from Felis catus (Cat).